The chain runs to 378 residues: Pre-B-cell leukemia transcription factor 4 (378 aa).

Pro residues predominate over residues 1–15 (MAAPLRPVPPQPAPR). Disordered regions lie at residues 1-24 (MAAP…APLG) and 100-125 (VSRP…PNDN). The 193-residue stretch at 22–214 (PLGHDTSDVL…VMTLRSRFLD (193 aa)) folds into the PBC domain. A PBC-A region spans residues 29–107 (DVLQQIMAIT…EGVSRPEKRG (79 aa)). Residues 109-120 (GAAAGSTATPGG) are compositionally biased toward low complexity. The interval 110–214 (AAAGSTATPG…VMTLRSRFLD (105 aa)) is PBC-B. Positions 215–277 (ARRKRRNFSK…NKRIRYKKNT (63 aa)) form a DNA-binding region, homeobox; TALE-type. 2 disordered regions span residues 291-320 (ASTV…PLPL) and 355-378 (RAAP…AASN). Positions 356-370 (AAPQPASSPAGESGS) are enriched in low complexity.

This sequence belongs to the TALE/PBX homeobox family. Almost exclusively expressed in testis.

It is found in the nucleus. This is Pre-B-cell leukemia transcription factor 4 (Pbx4) from Mus musculus (Mouse).